Consider the following 367-residue polypeptide: Probable ATP-dependent RNA helicase MJ0669 (367 aa).

The short motif at 6–34 (MNFNELNLSDNILNAIRNKGFEKPTDIQM) is the Q motif element. Positions 38-206 (PLFLNDEYNI…KKYMGDYSFI (169 aa)) constitute a Helicase ATP-binding domain. Position 51-58 (51-58 (ARTGSGKT)) interacts with ATP. Residues 154–157 (DEAD) carry the DEAD box motif. In terms of domain architecture, Helicase C-terminal spans 213–367 (NIEQSYVEVN…KLKIKKLKFG (155 aa)).

The protein belongs to the DEAD box helicase family. In terms of assembly, homodimer.

The catalysed reaction is ATP + H2O = ADP + phosphate + H(+). This is Probable ATP-dependent RNA helicase MJ0669 from Methanocaldococcus jannaschii (strain ATCC 43067 / DSM 2661 / JAL-1 / JCM 10045 / NBRC 100440) (Methanococcus jannaschii).